A 473-amino-acid chain; its full sequence is Heavy metal-associated isoprenylated plant protein 32 (473 aa).

Residues 9 to 72 (IQTCVLKVNI…KLAKSGKHAE (64 aa)) enclose the HMA domain. Residues Cys20 and Cys23 each coordinate a metal cation. Disordered stretches follow at residues 96-139 (QIDH…KMGQ), 162-230 (KLPP…PNMT), and 246-343 (ANLA…QNMS). Residues 118–131 (KNGGGGGGGGGGGN) are compositionally biased toward gly residues. The segment covering 187–217 (PEDDDDDDFSDEFDDEFTDDDDDEFDDEFDD) has biased composition (acidic residues). The span at 253–339 (AKNGGKGAPA…GFRPMGGGGP (87 aa)) shows a compositional bias: gly residues. Cys470 carries the cysteine methyl ester modification. A lipid anchor (S-farnesyl cysteine) is attached at Cys470. The propeptide at 471-473 (DIM) is removed in mature form.

The protein belongs to the HIPP family.

Functionally, heavy-metal-binding protein. This Arabidopsis thaliana (Mouse-ear cress) protein is Heavy metal-associated isoprenylated plant protein 32.